Consider the following 1042-residue polypeptide: Elongation factor 3 (1042 aa).

HEAT repeat units lie at residues 9–46 (KVLMDLIPKLKISMQETDKNEVIKNSEQHSSVSWDPDT), 86–124 (PYLVRLLPRVLKQVGLEKVAAVRTQASTVAEDIIKTMNP), 167–204 (YRLPELIPILSESMWDTRTDIKNQARKTMTSVCTLISN), 206–242 (DIDKFIPVLIDCIAQPEKVPETIHTLGATTFVQEVHA), 243–280 (STLSIMVPLLYRGLNERETTIKRKSAVIIDNMCKLVED), and 289–327 (PKLIPTLEHIKETIGDPECRSVVNRSLATLIRVGNVKEG). ABC transporter domains are found at residues 425–642 (EEGE…YQDI) and 668–994 (CRMR…EQEE). 4 residues coordinate ADP: N704, E923, N926, and H952. Positions 1009–1042 (KKAKKLTSSELRKKKKERMARRKKGEEVFSDEDD) are disordered. The span at 1020–1031 (RKKKKERMARRK) shows a compositional bias: basic residues.

Belongs to the ABC transporter superfamily. ABCF family. EF3 subfamily. In terms of assembly, monomer.

The protein resides in the cytoplasm. The catalysed reaction is ATP + H2O = ADP + phosphate + H(+). It functions in the pathway protein biosynthesis; polypeptide chain elongation. Its function is as follows. Ribosome-dependent ATPase that functions in cytoplasmic translation elongation. Required for the ATP-dependent release of deacylated tRNA from the ribosomal E-site during protein biosynthesis. Stimulates the eEF1A-dependent binding of aminoacyl-tRNA to the ribosomal A-site, which has reduced affinity for tRNA as long as the E-site is occupied. Assists translation termination by stimulating the release of nascent protein from the ribosome by release factors. The sequence is that of Elongation factor 3 (TEF3) from Pneumocystis carinii.